We begin with the raw amino-acid sequence, 496 residues long: ATP synthase subunit beta (496 aa).

155–162 lines the ATP pocket; it reads GGAGVGKT.

The protein belongs to the ATPase alpha/beta chains family. In terms of assembly, F-type ATPases have 2 components, CF(1) - the catalytic core - and CF(0) - the membrane proton channel. CF(1) has five subunits: alpha(3), beta(3), gamma(1), delta(1), epsilon(1). CF(0) has three main subunits: a(1), b(2) and c(9-12). The alpha and beta chains form an alternating ring which encloses part of the gamma chain. CF(1) is attached to CF(0) by a central stalk formed by the gamma and epsilon chains, while a peripheral stalk is formed by the delta and b chains.

It is found in the cell membrane. The catalysed reaction is ATP + H2O + 4 H(+)(in) = ADP + phosphate + 5 H(+)(out). In terms of biological role, produces ATP from ADP in the presence of a proton gradient across the membrane. The catalytic sites are hosted primarily by the beta subunits. This is ATP synthase subunit beta from Karelsulcia muelleri (strain GWSS) (Sulcia muelleri).